Here is a 286-residue protein sequence, read N- to C-terminus: Putative S-adenosyl-L-methionine-dependent methyltransferase FRAAL3718 (286 aa).

Residues Asp122 and 151–152 each bind S-adenosyl-L-methionine; that span reads DL.

This sequence belongs to the UPF0677 family.

Functionally, exhibits S-adenosyl-L-methionine-dependent methyltransferase activity. This chain is Putative S-adenosyl-L-methionine-dependent methyltransferase FRAAL3718, found in Frankia alni (strain DSM 45986 / CECT 9034 / ACN14a).